Here is a 546-residue protein sequence, read N- to C-terminus: Glutathione reductase (546 aa).

An apicoplast-targeting transit peptide spans 2–46 (YKHRYFHFFFFFFFFLVSTKIIRSFTFLNNNTNLSNPVYFKKKAN). 2 residues coordinate FAD: Ser58 and Gly59. Residue Ser58 participates in glutathione binding. Residue Arg65 participates in glutathione binding. Positions 78, 85, 86, and 94 each coordinate FAD. A disulfide bond links Cys86 and Cys91. A glutathione-binding site is contributed by Tyr141. Ala157 serves as a coordination point for FAD. Positions 233, 236, 253, 259, and 318 each coordinate NADP(+). Asp358 and Thr400 together coordinate FAD. Arg408 serves as a coordination point for glutathione. NADP(+) is bound at residue Val430. Residue His531 coordinates FAD. His531 (proton acceptor) is an active-site residue.

The protein belongs to the class-I pyridine nucleotide-disulfide oxidoreductase family. Homodimer. Requires FAD as cofactor.

It localises to the cytoplasm. It is found in the plastid. Its subcellular location is the apicoplast. The enzyme catalyses 2 glutathione + NADP(+) = glutathione disulfide + NADPH + H(+). In terms of biological role, catalyzes the reduction of glutathione disulfide (GSSG) to reduced glutathione (GSH). Constitutes the major mechanism to maintain a high GSH:GSSG ratio in the cytosol. In Plasmodium falciparum (isolate 3D7), this protein is Glutathione reductase.